A 475-amino-acid polypeptide reads, in one-letter code: Aspartyl/glutamyl-tRNA(Asn/Gln) amidotransferase subunit B (475 aa).

The protein belongs to the GatB/GatE family. GatB subfamily. Heterotrimer of A, B and C subunits.

It carries out the reaction L-glutamyl-tRNA(Gln) + L-glutamine + ATP + H2O = L-glutaminyl-tRNA(Gln) + L-glutamate + ADP + phosphate + H(+). The catalysed reaction is L-aspartyl-tRNA(Asn) + L-glutamine + ATP + H2O = L-asparaginyl-tRNA(Asn) + L-glutamate + ADP + phosphate + 2 H(+). Allows the formation of correctly charged Asn-tRNA(Asn) or Gln-tRNA(Gln) through the transamidation of misacylated Asp-tRNA(Asn) or Glu-tRNA(Gln) in organisms which lack either or both of asparaginyl-tRNA or glutaminyl-tRNA synthetases. The reaction takes place in the presence of glutamine and ATP through an activated phospho-Asp-tRNA(Asn) or phospho-Glu-tRNA(Gln). This is Aspartyl/glutamyl-tRNA(Asn/Gln) amidotransferase subunit B from Staphylococcus aureus (strain bovine RF122 / ET3-1).